The sequence spans 61 residues: Weak toxin CM-1c (61 aa).

4 cysteine pairs are disulfide-bonded: Cys3–Cys21, Cys14–Cys37, Cys41–Cys53, and Cys54–Cys59.

The protein belongs to the three-finger toxin family. Short-chain subfamily. Orphan group VI sub-subfamily. As to expression, expressed by the venom gland.

Its subcellular location is the secreted. The polypeptide is Weak toxin CM-1c (Hemachatus haemachatus (Rinkhals)).